The primary structure comprises 47 residues: Variabilin (47 aa).

The Cell attachment site motif lies at Arg-32–Asp-34.

Contains 2 disulfide bonds. Expressed in salivary glands.

It localises to the secreted. Potently inhibits platelet aggregation induced by ADP (IC(50)=157 nM, complete inhibition at 514 nM). Also inhibits platelet aggregation induced by collagen and by the thrombin receptor peptide SFLLRNP. Is a potent antagonist of the fibrinogen receptor glycoprotein IIb-IIIa (ITGA2B/ITGB3) and the vitronectin receptor alpha-v/beta-3 (ITGAV/ITGB3). The polypeptide is Variabilin (Dermacentor variabilis (American dog tick)).